A 316-amino-acid chain; its full sequence is Pantothenate kinase (316 aa).

Residue 95–102 (GSVAVGKS) coordinates ATP.

Belongs to the prokaryotic pantothenate kinase family.

It is found in the cytoplasm. It carries out the reaction (R)-pantothenate + ATP = (R)-4'-phosphopantothenate + ADP + H(+). It participates in cofactor biosynthesis; coenzyme A biosynthesis; CoA from (R)-pantothenate: step 1/5. The polypeptide is Pantothenate kinase (Shewanella baltica (strain OS195)).